The primary structure comprises 355 residues: Peptide chain release factor 1 (355 aa).

An N5-methylglutamine modification is found at glutamine 233.

Belongs to the prokaryotic/mitochondrial release factor family. Post-translationally, methylated by PrmC. Methylation increases the termination efficiency of RF1.

Its subcellular location is the cytoplasm. In terms of biological role, peptide chain release factor 1 directs the termination of translation in response to the peptide chain termination codons UAG and UAA. The sequence is that of Peptide chain release factor 1 from Desulforudis audaxviator (strain MP104C).